We begin with the raw amino-acid sequence, 92 residues long: Parbolysin P7 (92 aa).

Cystine bridges form between Cys15–Cys36, Cys21–Cys32, and Cys46–Cys59.

Belongs to the worm cytolysin family. Localized within the skin and proboscis and are most readily isolated from body mucus secretions.

The protein resides in the secreted. Its function is as follows. Cytolysin that shows hemolytic activity (on bovine erythrocytes, HC(50)=5.75 mg/ml). This hemolytic activity is completely inhibited by small unilamelar vesicles composed of PC/PG, PC/PI and PC/PS in 1:1 molar ratios (with at least 100 mg/ml concentration). The chain is Parbolysin P7 from Parborlasia corrugatus (Antarctic nemertean worm).